The following is a 379-amino-acid chain: Succinyl-diaminopimelate desuccinylase (379 aa).

A Zn(2+)-binding site is contributed by H68. D70 is an active-site residue. D101 contacts Zn(2+). E135 functions as the Proton acceptor in the catalytic mechanism. Zn(2+) is bound by residues E136, E164, and H350.

Belongs to the peptidase M20A family. DapE subfamily. As to quaternary structure, homodimer. Zn(2+) serves as cofactor. It depends on Co(2+) as a cofactor.

The enzyme catalyses N-succinyl-(2S,6S)-2,6-diaminopimelate + H2O = (2S,6S)-2,6-diaminopimelate + succinate. Its pathway is amino-acid biosynthesis; L-lysine biosynthesis via DAP pathway; LL-2,6-diaminopimelate from (S)-tetrahydrodipicolinate (succinylase route): step 3/3. Its function is as follows. Catalyzes the hydrolysis of N-succinyl-L,L-diaminopimelic acid (SDAP), forming succinate and LL-2,6-diaminopimelate (DAP), an intermediate involved in the bacterial biosynthesis of lysine and meso-diaminopimelic acid, an essential component of bacterial cell walls. This Bordetella bronchiseptica (strain ATCC BAA-588 / NCTC 13252 / RB50) (Alcaligenes bronchisepticus) protein is Succinyl-diaminopimelate desuccinylase.